Consider the following 270-residue polypeptide: Glucosamine-6-phosphate deaminase (270 aa).

Asp-72 functions as the Proton acceptor; for enolization step in the catalytic mechanism. Catalysis depends on Asp-141, which acts as the For ring-opening step. His-143 functions as the Proton acceptor; for ring-opening step in the catalytic mechanism. The For ring-opening step role is filled by Glu-148.

Belongs to the glucosamine/galactosamine-6-phosphate isomerase family. NagB subfamily.

It catalyses the reaction alpha-D-glucosamine 6-phosphate + H2O = beta-D-fructose 6-phosphate + NH4(+). It functions in the pathway amino-sugar metabolism; N-acetylneuraminate degradation; D-fructose 6-phosphate from N-acetylneuraminate: step 5/5. With respect to regulation, allosterically activated by N-acetylglucosamine 6-phosphate (GlcNAc6P). Functionally, catalyzes the reversible isomerization-deamination of glucosamine 6-phosphate (GlcN6P) to form fructose 6-phosphate (Fru6P) and ammonium ion. This is Glucosamine-6-phosphate deaminase from Bacteroides fragilis (strain ATCC 25285 / DSM 2151 / CCUG 4856 / JCM 11019 / LMG 10263 / NCTC 9343 / Onslow / VPI 2553 / EN-2).